A 272-amino-acid chain; its full sequence is 3-methyl-2-oxobutanoate hydroxymethyltransferase (272 aa).

D54 and D93 together coordinate Mg(2+). Residues D54–S55, D93, and K123 each bind 3-methyl-2-oxobutanoate. E125 lines the Mg(2+) pocket. The active-site Proton acceptor is the E190.

It belongs to the PanB family. As to quaternary structure, homodecamer; pentamer of dimers. Mg(2+) serves as cofactor.

Its subcellular location is the cytoplasm. The catalysed reaction is 3-methyl-2-oxobutanoate + (6R)-5,10-methylene-5,6,7,8-tetrahydrofolate + H2O = 2-dehydropantoate + (6S)-5,6,7,8-tetrahydrofolate. Its pathway is cofactor biosynthesis; (R)-pantothenate biosynthesis; (R)-pantoate from 3-methyl-2-oxobutanoate: step 1/2. Its function is as follows. Catalyzes the reversible reaction in which hydroxymethyl group from 5,10-methylenetetrahydrofolate is transferred onto alpha-ketoisovalerate to form ketopantoate. This Tropheryma whipplei (strain Twist) (Whipple's bacillus) protein is 3-methyl-2-oxobutanoate hydroxymethyltransferase.